The primary structure comprises 425 residues: Glutamyl-tRNA(Gln) amidotransferase subunit D (425 aa).

Positions 53–84 (ENNGEAANGGNGGKNGQKEPEPAKEKVSKPGL) are disordered. A compositionally biased stretch (basic and acidic residues) spans 68 to 80 (GQKEPEPAKEKVS). The region spanning 85 to 414 (PKVSILSTGG…EKAVSMLGEN (330 aa)) is the Asparaginase/glutaminase domain. Catalysis depends on residues threonine 95, threonine 171, aspartate 172, and lysine 248.

It belongs to the asparaginase 1 family. GatD subfamily. In terms of assembly, heterodimer of GatD and GatE.

It catalyses the reaction L-glutamyl-tRNA(Gln) + L-glutamine + ATP + H2O = L-glutaminyl-tRNA(Gln) + L-glutamate + ADP + phosphate + H(+). Functionally, allows the formation of correctly charged Gln-tRNA(Gln) through the transamidation of misacylated Glu-tRNA(Gln) in organisms which lack glutaminyl-tRNA synthetase. The reaction takes place in the presence of glutamine and ATP through an activated gamma-phospho-Glu-tRNA(Gln). The GatDE system is specific for glutamate and does not act on aspartate. The chain is Glutamyl-tRNA(Gln) amidotransferase subunit D from Methanosarcina mazei (strain ATCC BAA-159 / DSM 3647 / Goe1 / Go1 / JCM 11833 / OCM 88) (Methanosarcina frisia).